The primary structure comprises 256 residues: Autophagy-related protein 40 (256 aa).

An N-terminal signal peptide occupies residues 1–16 (MFNLILWPLFLLTSVA). Residues 17-67 (IPLQLTLEVVYLTSSVDFSKASAAKTATSLGQSPVVITIYKSLLKYWSLYE) lie on the Lumenal side of the membrane. A helical transmembrane segment spans residues 68-88 (FIHFIYLYTPIDAFLNFLPFT). Over 89-256 (SLLMSFGSIC…DILDETTELD (168 aa)) the chain is Cytoplasmic. Positions 197-243 (QPQGDKNRYQNGDRESTKNGAAYQKSSQQSSSFEQNFTSTEFPNDYD) are disordered. Positions 199–213 (QGDKNRYQNGDREST) are enriched in basic and acidic residues. The span at 222 to 238 (SSQQSSSFEQNFTSTEF) shows a compositional bias: low complexity. The ATG8-binding signature appears at 242 to 245 (YDFM).

Interacts with ATG8 and ATG11.

It is found in the endoplasmic reticulum membrane. The protein resides in the preautophagosomal structure membrane. Functionally, acts as a receptor for reticulophagy. Directs autophagic sequestration of folded tubules/sheets derived from the cortical endoplasmic reticulum (cER) and the cytoplasmic endoplasmic reticulum (cytoER) into autophagosomes. Is not required for the cytoplasm-to-vacuole targeting pathway, mitophagy, pexophagy, and non-selective autophagy. The protein is Autophagy-related protein 40 of Saccharomyces cerevisiae (strain ATCC 204508 / S288c) (Baker's yeast).